Here is a 74-residue protein sequence, read N- to C-terminus: NADH dehydrogenase [ubiquinone] 1 alpha subcomplex assembly factor 8 (74 aa).

In terms of domain architecture, CHCH spans 22–69; sequence LAACGAEAAAYGRCVQASTAPGGRLSKDFCAREFEALRSCFAAAAKKT. 2 consecutive short sequence motifs (cx9C motif) follow at residues 25–35 and 51–61; these read CGAEAAAYGRC and CAREFEALRSC. 2 disulfide bridges follow: C25/C61 and C35/C51.

In terms of assembly, interacts with NDUFAF5.

The protein resides in the mitochondrion. Functionally, involved in the assembly of mitochondrial NADH:ubiquinone oxidoreductase complex (complex I, MT-ND1). Required to stabilize NDUFAF5. This Homo sapiens (Human) protein is NADH dehydrogenase [ubiquinone] 1 alpha subcomplex assembly factor 8.